The chain runs to 358 residues: Gap junction alpha-5 protein (358 aa).

Residues 1–19 (MGDWSFLGEFLEEVHKHST) are Cytoplasmic-facing. The helical transmembrane segment at 20 to 40 (VIGKVWLTVLFIFRMLVLGTA) threads the bilayer. Residues 41 to 76 (AESSWGDEQADFRCDTIQPGCQNVCYDQAFPISHIR) are Extracellular-facing. A helical membrane pass occupies residues 77–97 (YWVLQIIFVSTPSLVYMGHAM). The Cytoplasmic portion of the chain corresponds to 98–164 (HTVRMQEKQK…CTILIRTTME (67 aa)). A helical membrane pass occupies residues 165 to 185 (VAFIVGQYLLYGIFLDTLHVC). Topologically, residues 186 to 205 (RRSPCPHPVNCYVSRPTEKN) are extracellular. Residues 206–226 (VFIVFMMAVAGLSLFLSLAEL) form a helical membrane-spanning segment. The Cytoplasmic segment spans residues 227–358 (YHLGWKKIRQ…SKARSDDLSV (132 aa)). 2 disordered regions span residues 242 to 262 (RQGV…QSLT) and 318 to 358 (SQKP…DLSV). Phosphoserine is present on residues serine 353 and serine 357.

It belongs to the connexin family. Alpha-type (group II) subfamily. In terms of assembly, a connexon is composed of a hexamer of connexins. Abundantly expressed in the lung, also expressed in the kidney and heart.

It localises to the cell membrane. It is found in the cell junction. The protein resides in the gap junction. One gap junction consists of a cluster of closely packed pairs of transmembrane channels, the connexons, through which materials of low MW diffuse from one cell to a neighboring cell. This Mus musculus (Mouse) protein is Gap junction alpha-5 protein (Gja5).